Consider the following 282-residue polypeptide: Endonuclease V (282 aa).

Residues D52 and D126 each coordinate Mg(2+). A disordered region spans residues 250–282; that stretch reads SLGLPGPPTPRSPKAQRPVACPKGDSGESSALC.

It belongs to the endonuclease V family. In terms of assembly, monomer. Interacts with PABPC1; the interaction is RNA-dependent and stimulates ENDOV activity. Requires Mg(2+) as cofactor.

Its subcellular location is the cytoplasm. It localises to the nucleus. It is found in the nucleolus. The protein resides in the stress granule. With respect to regulation, inhibited by normal intracellular concentrations of ATP. In terms of biological role, endoribonuclease that specifically cleaves inosine-containing RNAs: cleaves RNA at the second phosphodiester bond 3' to inosine. Active against both single-stranded and double-stranded RNAs. Has strong preference for single-stranded RNAs (ssRNAs) toward double-stranded RNAs (dsRNAs). Cleaves mRNAs and tRNAs containing inosine. Also able to cleave structure-specific dsRNA substrates containing the specific sites 5'-IIUI-3' and 5'-UIUU-3'. Inosine is present in a number of RNAs following editing; the function of inosine-specific endoribonuclease is still unclear: it could either play a regulatory role in edited RNAs, or be involved in antiviral response by removing the hyperedited long viral dsRNA genome that has undergone A-to-I editing. Binds branched DNA structures. Functionally, endoribonuclease that specifically cleaves inosine-containing RNAs: cleaves RNA at the second phosphodiester bond 3' to inosine. Active against both single-stranded and double-stranded RNAs. Cleaves tRNAs containing inosine. The sequence is that of Endonuclease V (ENDOV) from Homo sapiens (Human).